The primary structure comprises 403 residues: Methylthioribose-1-phosphate isomerase (403 aa).

D280 functions as the Proton donor in the catalytic mechanism.

The protein belongs to the eIF-2B alpha/beta/delta subunits family. MtnA subfamily.

The protein resides in the cytoplasm. It localises to the nucleus. The enzyme catalyses 5-(methylsulfanyl)-alpha-D-ribose 1-phosphate = 5-(methylsulfanyl)-D-ribulose 1-phosphate. It participates in amino-acid biosynthesis; L-methionine biosynthesis via salvage pathway; L-methionine from S-methyl-5-thio-alpha-D-ribose 1-phosphate: step 1/6. Its function is as follows. Catalyzes the interconversion of methylthioribose-1-phosphate (MTR-1-P) into methylthioribulose-1-phosphate (MTRu-1-P). In Eremothecium gossypii (strain ATCC 10895 / CBS 109.51 / FGSC 9923 / NRRL Y-1056) (Yeast), this protein is Methylthioribose-1-phosphate isomerase.